The sequence spans 1738 residues: Gag-Pol polyprotein (1738 aa).

A lipid anchor (N-myristoyl glycine; by host) is attached at G2. Positions P111 to P114 match the PTAP/PSAP motif motif. A compositionally biased stretch (pro residues) spans P111–T124. Residues P111–R218 are disordered. Positions L130 to L134 match the LYPX(n)L motif motif. Residues D161–P173 show a composition bias toward pro residues. Residues P162 to Y165 carry the PPXY motif motif. S192 is modified (phosphoserine; by host). Positions G345 to V393 are interaction with host PIAS4. An interaction with host UBE2I region spans residues I430–E435. 2 stretches are compositionally biased toward basic and acidic residues: residues R434–R466 and R486–L499. Disordered regions lie at residues R434–L499 and W513–I552. Positions E438–L478 form a coiled coil. A CCHC-type zinc finger spans residues D502–K519. Residues V561–L631 form the Peptidase A2 domain. Residue D566 is the Protease; shared with dimeric partner of the active site. In terms of domain architecture, Reverse transcriptase spans L741–L932. Mg(2+)-binding residues include D809, D883, D884, D1183, E1221, D1242, and D1312. The 147-residue stretch at P1174 to T1320 folds into the RNase H type-1 domain. The HHCC-type zinc-finger motif lies at H1387 to C1427. The 159-residue stretch at R1444 to P1602 folds into the Integrase catalytic domain. The Mg(2+) site is built by D1455 and D1514.

The protein belongs to the retroviral Pol polyprotein family. In terms of assembly, homohexamer; further associates as homomultimer. The virus core is composed of a lattice formed from hexagonal rings, each containing six capsid monomers. Interacts with mouse UBE2I and mouse PIAS4. Interacts (via PPXY motif) with host NEDD4. Interacts (via PSAP motif) with host TSG101. Interacts (via LYPX(n)L motif) with host PDCD6IP. As to quaternary structure, the reverse transcriptase is a monomer (Potential). Interacts (via RNase domains) with host release factor ETF1; this interaction is essential for translational readthrough of amber codon between viral gag and pol genes, as well as for viral replication. In terms of assembly, homodimer. It depends on Mg(2+) as a cofactor. Ubiquitinated by ITCH. Gag can recruit the ubiquitin ligase Itch in an L domain-independent manner to facilitate virus release via a mechanism that involves Gag ubiquitination. In terms of processing, specific enzymatic cleavages by the viral protease yield mature proteins. The protease is released by autocatalytic cleavage. The polyprotein is cleaved during and after budding, this process is termed maturation. Post-translationally, sumoylated; which is required for virus replication. Phosphorylated on serine residues.

It is found in the virion. It localises to the host cell membrane. The protein localises to the host late endosome membrane. The protein resides in the host endosome. Its subcellular location is the host multivesicular body. It is found in the host cytoplasm. The enzyme catalyses DNA(n) + a 2'-deoxyribonucleoside 5'-triphosphate = DNA(n+1) + diphosphate. It catalyses the reaction Endonucleolytic cleavage to 5'-phosphomonoester.. With respect to regulation, most efficiently inhibited by Amprenavir, which is able to block Gag-Pol processing in infected cells. In terms of biological role, plays a role in budding and is processed by the viral protease during virion maturation outside the cell. During budding, it recruits, in a PPXY-dependent or independent manner, Nedd4-like ubiquitin ligases that conjugate ubiquitin molecules to Gag-Pol, or to Gag-Pol binding host factors. Interaction with HECT ubiquitin ligases probably links the viral protein to the host ESCRT pathway and facilitates release. Targets Gag and gag-pol polyproteins to the plasma membrane via a multipartite membrane binding signal, that includes its myristoylated N-terminus. Also mediates nuclear localization of the pre-integration complex. Functionally, constituent of the pre-integration complex (PIC) which tethers the latter to mitotic chromosomes. This allows the integration of the viral genome into the host DNA. Its function is as follows. Forms the spherical core of the virion that encapsulates the genomic RNA-nucleocapsid complex. In terms of biological role, involved in the packaging and encapsidation of two copies of the genome. Binds with high affinity to conserved UCUG elements within the packaging signal, located near the 5'-end of the genome. This binding is dependent on genome dimerization. Acts as a nucleic acid chaperone which is involved in rearrangement of nucleic acid secondary structures during gRNA retrotranscription. The aspartyl protease mediates proteolytic cleavages of Gag and Gag-Pol polyproteins during or shortly after the release of the virion from the plasma membrane. Cleavages take place as an ordered, step-wise cascade to yield mature proteins. This process is called maturation. Displays maximal activity during the budding process just prior to particle release from the cell (Potential). Cleaves the translation initiation factor eIF4G leading to the inhibition of host cap-dependent translation. Functionally, RT is a multifunctional enzyme that converts the viral dimeric RNA genome into dsDNA in the cytoplasm, shortly after virus entry into the cell. This enzyme displays a DNA polymerase activity that can copy either DNA or RNA templates, and a ribonuclease H (RNase H) activity that cleaves the RNA strand of RNA-DNA heteroduplexes in a partially processive 3' to 5' endonucleasic mode. Conversion of viral genomic RNA into dsDNA requires many steps. A tRNA binds to the primer-binding site (PBS) situated at the 5' end of the viral RNA. RT uses the 3' end of the tRNA primer to perform a short round of RNA-dependent minus-strand DNA synthesis. The reading proceeds through the U5 region and ends after the repeated (R) region which is present at both ends of viral RNA. The portion of the RNA-DNA heteroduplex is digested by the RNase H, resulting in a ssDNA product attached to the tRNA primer. This ssDNA/tRNA hybridizes with the identical R region situated at the 3' end of viral RNA. This template exchange, known as minus-strand DNA strong stop transfer, can be either intra- or intermolecular. RT uses the 3' end of this newly synthesized short ssDNA to perform the RNA-dependent minus-strand DNA synthesis of the whole template. RNase H digests the RNA template except for a polypurine tract (PPT) situated at the 5' end of the genome. It is not clear if both polymerase and RNase H activities are simultaneous. RNase H probably can proceed both in a polymerase-dependent (RNA cut into small fragments by the same RT performing DNA synthesis) and a polymerase-independent mode (cleavage of remaining RNA fragments by free RTs). Secondly, RT performs DNA-directed plus-strand DNA synthesis using the PPT that has not been removed by RNase H as primers. PPT and tRNA primers are then removed by RNase H. The 3' and 5' ssDNA PBS regions hybridize to form a circular dsDNA intermediate. Strand displacement synthesis by RT to the PBS and PPT ends produces a blunt ended, linear dsDNA copy of the viral genome that includes long terminal repeats (LTRs) at both ends. Its function is as follows. Catalyzes viral DNA integration into the host chromosome, by performing a series of DNA cutting and joining reactions. This enzyme activity takes place after virion entry into a cell and reverse transcription of the RNA genome in dsDNA. The first step in the integration process is 3' processing. This step requires a complex comprising the viral genome, matrix protein and integrase. This complex is called the pre-integration complex (PIC). The integrase protein removes 2 nucleotides from each 3' end of the viral DNA, leaving recessed CA OH's at the 3' ends. In the second step that requires cell division, the PIC enters cell nucleus. In the third step, termed strand transfer, the integrase protein joins the previously processed 3' ends to the 5' ends of strands of target cellular DNA at the site of integration. The last step is viral DNA integration into host chromosome. The chain is Gag-Pol polyprotein (pol) from Friend murine leukemia virus (isolate PVC-211) (FrMLV).